The primary structure comprises 728 residues: Methionine--tRNA ligase (728 aa).

A 'HIGH' region motif is present at residues 13–23 (PYANGSIHLGH). Zn(2+) contacts are provided by C144, C147, C157, and C160. The 'KMSKS' region signature appears at 348 to 352 (KMSKS). K351 lines the ATP pocket. A disordered region spans residues 585 to 620 (LAPAKSQQVAQAVETMEKNSSTTPAPAKEGEAGQAS). The 101-residue stretch at 628–728 (DFGKIDLRVA…EGARPGMKVK (101 aa)) folds into the tRNA-binding domain.

Belongs to the class-I aminoacyl-tRNA synthetase family. MetG type 1 subfamily. Homodimer. The cofactor is Zn(2+).

It is found in the cytoplasm. It catalyses the reaction tRNA(Met) + L-methionine + ATP = L-methionyl-tRNA(Met) + AMP + diphosphate. Its function is as follows. Is required not only for elongation of protein synthesis but also for the initiation of all mRNA translation through initiator tRNA(fMet) aminoacylation. This Nitrosospira multiformis (strain ATCC 25196 / NCIMB 11849 / C 71) protein is Methionine--tRNA ligase.